Here is a 497-residue protein sequence, read N- to C-terminus: Bifunctional protein GlmU (497 aa).

A pyrophosphorylase region spans residues 1–243 (MTSSTTSSTD…SALVAGVNDR (243 aa)). UDP-N-acetyl-alpha-D-glucosamine-binding positions include 16-19 (LAAG), Lys-30, Gln-87, and 92-93 (GT). Asp-118 contributes to the Mg(2+) binding site. Gly-153, Glu-168, Asn-183, and Asn-241 together coordinate UDP-N-acetyl-alpha-D-glucosamine. Asn-241 contacts Mg(2+). The interval 244–264 (VQLAALGAELNRRIVTAHQRA) is linker. Residues 265-497 (GVTVIDPGST…LGHHDDSQGS (233 aa)) are N-acetyltransferase. 2 residues coordinate UDP-N-acetyl-alpha-D-glucosamine: Arg-346 and Lys-364. Residue His-376 is the Proton acceptor of the active site. Residues Tyr-379 and Asn-390 each coordinate UDP-N-acetyl-alpha-D-glucosamine. Residues Ala-393, 399–400 (NY), Ser-418, and Ala-436 contribute to the acetyl-CoA site. The disordered stretch occupies residues 473 to 497 (ARAAERASGEAAEQALGHHDDSQGS). Residues 488–497 (LGHHDDSQGS) show a composition bias toward basic and acidic residues.

This sequence in the N-terminal section; belongs to the N-acetylglucosamine-1-phosphate uridyltransferase family. The protein in the C-terminal section; belongs to the transferase hexapeptide repeat family. In terms of assembly, homotrimer. Mg(2+) serves as cofactor.

The protein localises to the cytoplasm. The catalysed reaction is alpha-D-glucosamine 1-phosphate + acetyl-CoA = N-acetyl-alpha-D-glucosamine 1-phosphate + CoA + H(+). The enzyme catalyses N-acetyl-alpha-D-glucosamine 1-phosphate + UTP + H(+) = UDP-N-acetyl-alpha-D-glucosamine + diphosphate. The protein operates within nucleotide-sugar biosynthesis; UDP-N-acetyl-alpha-D-glucosamine biosynthesis; N-acetyl-alpha-D-glucosamine 1-phosphate from alpha-D-glucosamine 6-phosphate (route II): step 2/2. It functions in the pathway nucleotide-sugar biosynthesis; UDP-N-acetyl-alpha-D-glucosamine biosynthesis; UDP-N-acetyl-alpha-D-glucosamine from N-acetyl-alpha-D-glucosamine 1-phosphate: step 1/1. Its pathway is bacterial outer membrane biogenesis; LPS lipid A biosynthesis. In terms of biological role, catalyzes the last two sequential reactions in the de novo biosynthetic pathway for UDP-N-acetylglucosamine (UDP-GlcNAc). The C-terminal domain catalyzes the transfer of acetyl group from acetyl coenzyme A to glucosamine-1-phosphate (GlcN-1-P) to produce N-acetylglucosamine-1-phosphate (GlcNAc-1-P), which is converted into UDP-GlcNAc by the transfer of uridine 5-monophosphate (from uridine 5-triphosphate), a reaction catalyzed by the N-terminal domain. The polypeptide is Bifunctional protein GlmU (Mycobacterium sp. (strain JLS)).